Consider the following 167-residue polypeptide: Regulatory protein RecX (167 aa).

The tract at residues 19–49 (ESELRRKLASQPFSAKGHWGKQTGRSDNEPV) is disordered.

This sequence belongs to the RecX family.

The protein resides in the cytoplasm. Its function is as follows. Modulates RecA activity. This Yersinia enterocolitica serotype O:8 / biotype 1B (strain NCTC 13174 / 8081) protein is Regulatory protein RecX.